We begin with the raw amino-acid sequence, 202 residues long: Na(+)-translocating NADH-quinone reductase subunit E (202 aa).

Transmembrane regions (helical) follow at residues 11 to 31, 39 to 59, 79 to 99, 114 to 134, 144 to 164, and 180 to 200; these read SIFLENMALFYFLGMCTFLAV, MGLGVAVIVVLTISVPVNQLV, LSFLSFLTFIGVIAALVQILE, GIFLPLITVNCAIFGGVAFAV, IFYGAGSGAGWALAITLLAAV, and LGSVFMIAGLMALGFQSFSGV.

This sequence belongs to the NqrDE/RnfAE family. As to quaternary structure, composed of six subunits; NqrA, NqrB, NqrC, NqrD, NqrE and NqrF.

The protein resides in the cell inner membrane. It carries out the reaction a ubiquinone + n Na(+)(in) + NADH + H(+) = a ubiquinol + n Na(+)(out) + NAD(+). Functionally, NQR complex catalyzes the reduction of ubiquinone-1 to ubiquinol by two successive reactions, coupled with the transport of Na(+) ions from the cytoplasm to the periplasm. NqrA to NqrE are probably involved in the second step, the conversion of ubisemiquinone to ubiquinol. This chain is Na(+)-translocating NADH-quinone reductase subunit E, found in Pseudoalteromonas atlantica (strain T6c / ATCC BAA-1087).